The chain runs to 97 residues: Conotoxin Cal6.1b (97 aa).

Residues 1–22 (MKLTTVLVVALLVLAACQFTVT) form the signal peptide. Residues 22-46 (TDNSGDDPENPSLRSAGENQNPDST) form a disordered region. A propeptide spanning residues 23-68 (DNSGDDPENPSLRSAGENQNPDSTKTITAWATRDMTNMRRGLNRPS) is cleaved from the precursor. 3 disulfides stabilise this stretch: Cys-71-Cys-87, Cys-78-Cys-91, and Cys-86-Cys-96.

This sequence belongs to the conotoxin O1 superfamily. In terms of tissue distribution, expressed by the venom duct.

Its subcellular location is the secreted. Probable neurotoxin with unknown target. Possibly targets ion channels. The polypeptide is Conotoxin Cal6.1b (Californiconus californicus (California cone)).